The following is a 175-amino-acid chain: Co-chaperone protein HscB homolog (175 aa).

A J domain is found at 7 to 79; the sequence is SHFDLFHLPA…LQRASYLLSL (73 aa).

It belongs to the HscB family. Interacts with HscA and stimulates its ATPase activity.

Functionally, co-chaperone involved in the maturation of iron-sulfur cluster-containing proteins. Seems to help targeting proteins to be folded toward HscA. This chain is Co-chaperone protein HscB homolog, found in Burkholderia vietnamiensis (strain G4 / LMG 22486) (Burkholderia cepacia (strain R1808)).